Reading from the N-terminus, the 479-residue chain is Sulfate adenylyltransferase subunit 1 (479 aa).

Residues 25 to 239 (KSLLRFLTCG…EVLETVDIQR (215 aa)) enclose the tr-type G domain. A G1 region spans residues 34-41 (GSVDDGKS). GTP is bound at residue 34-41 (GSVDDGKS). Positions 92–96 (GITID) are G2. The G3 stretch occupies residues 113–116 (DTPG). GTP contacts are provided by residues 113–117 (DTPGH) and 168–171 (NKMD). Residues 168–171 (NKMD) are G4. A G5 region spans residues 206 to 208 (SAL).

This sequence belongs to the TRAFAC class translation factor GTPase superfamily. Classic translation factor GTPase family. CysN/NodQ subfamily. Heterodimer composed of CysD, the smaller subunit, and CysN.

The enzyme catalyses sulfate + ATP + H(+) = adenosine 5'-phosphosulfate + diphosphate. Its pathway is sulfur metabolism; hydrogen sulfide biosynthesis; sulfite from sulfate: step 1/3. With CysD forms the ATP sulfurylase (ATPS) that catalyzes the adenylation of sulfate producing adenosine 5'-phosphosulfate (APS) and diphosphate, the first enzymatic step in sulfur assimilation pathway. APS synthesis involves the formation of a high-energy phosphoric-sulfuric acid anhydride bond driven by GTP hydrolysis by CysN coupled to ATP hydrolysis by CysD. The chain is Sulfate adenylyltransferase subunit 1 from Salmonella agona (strain SL483).